A 235-amino-acid chain; its full sequence is Small ribosomal subunit protein uS5 (235 aa).

The S5 DRBM domain maps to 60–123; the sequence is ENQEVLDIAL…NYAKMNIIEI (64 aa). The Zn(2+) site is built by C127, C132, C134, and H138.

This sequence belongs to the universal ribosomal protein uS5 family. Part of the 30S ribosomal subunit. Contacts protein S4. Requires Zn(2+) as cofactor.

With S4 and S12 plays an important role in translational accuracy. The sequence is that of Small ribosomal subunit protein uS5 from Thermococcus kodakarensis (strain ATCC BAA-918 / JCM 12380 / KOD1) (Pyrococcus kodakaraensis (strain KOD1)).